We begin with the raw amino-acid sequence, 849 residues long: MEEGSEAQPPLQPEAVSAEASEPPPPVPMDQDEGQAAAAEAMEGEAEGAAAAAGTIEGEAGYAAADADPMEDEAADEAGAAEPMEDDPPTSSAPSATAAVDDSTIARKRRRRKKQFPGMIPTAGVRVLRAAASAPSAAHLNGVPRRRGRPPTSSSLRLARELDAEALIALAAGFPADSLSEDEVAAAVLPRIGGVDQTNYLVVRNHVLALWRSNPLSPVASNAALASIRAEHAHLVAAAHSFLSDHAYINFGLAPSVISLPPCPPPSLPPPSVLIVGAGFAGLAAARHLMSLGFKVAIVEGRLRPGGRVFTKSMRSTAAEYPDIAAAADLGGSVLTGINGNPLGVIARQLGFPLHKVRDKCPLYLPDGRPVDPDMDARVEAAFNQLLDKVCQLRQVVADSIPHGVDVSLGMALEAFRAAHGVAAEREERMLLDWHLANLEYANAAPLVDLSMAFWDQDDPYEMGGDHCFIPGGNSRFVRALADGIPIFYGQNVRRIQYGCDGAMVYTDKQTFRGDMVLCTVPLGVLKKGNIQFVPELPAQKREAIERLGFGLLNKVVLLFPYDFWDGRIDTFGHLTEDSGQRGEFFLFYSYSSVSGGPLLIALVAGESAIEFEKTSPAENVEKVLETLRKIFSPKGIEVPKPLQAICTRWGTDKFTYGSYSYVAIGSSGDDYDILAESVCDRVFFAGEATNRRYPATMHGALLSGYREAANIVRAARRRAKKVDSPKKMDVNNEVKYEVKVDNIDLDDLFRTPDAAFGGFSVLHDPSTSEPDSISLLRVGIGARKLGSGSLFLYGLIMRKNVANLAAMEGDEQRLSTLYRDFGTKLVGLDGLGDSGSSLISRIKAAARK.

A disordered region spans residues 1-118 (MEEGSEAQPP…RRRRKKQFPG (118 aa)). Low complexity-rich tracts occupy residues 34–67 (GQAA…AADA) and 89–103 (PTSS…VDDS). A compositionally biased stretch (basic residues) spans 106–115 (ARKRRRRKKQ). Positions 159-260 (ARELDAEALI…FGLAPSVISL (102 aa)) constitute an SWIRM domain. FAD contacts are provided by E300, R302, R308, and E688.

Belongs to the flavin monoamine oxidase family. FAD is required as a cofactor.

In terms of biological role, probable histone demethylase. The polypeptide is Lysine-specific histone demethylase 1 homolog 1 (Oryza sativa subsp. japonica (Rice)).